Reading from the N-terminus, the 177-residue chain is Dynein light chain Tctex-type 5-A (177 aa).

It belongs to the dynein light chain Tctex-type family.

This is Dynein light chain Tctex-type 5-A (Dynlt5-a) from Xenopus laevis (African clawed frog).